Here is a 61-residue protein sequence, read N- to C-terminus: Large ribosomal subunit protein uL30 (61 aa).

The protein belongs to the universal ribosomal protein uL30 family. As to quaternary structure, part of the 50S ribosomal subunit.

The sequence is that of Large ribosomal subunit protein uL30 from Francisella tularensis subsp. tularensis (strain FSC 198).